A 1239-amino-acid chain; its full sequence is Protein strawberry notch homolog 1 (1239 aa).

Residues 684–837 (AQSNNNSPRD…SANSNTNSSF (154 aa)) form a disordered region. The span at 694–713 (SPCKENKIKKRKGEEVSREA) shows a compositional bias: basic and acidic residues. Positions 728-744 (DESESESDASDNEESDN) are enriched in acidic residues. Over residues 778 to 790 (KEHKKVKEKKKKK) the composition is skewed to basic residues. The segment covering 814 to 837 (FTSTVGTTTSSTNASANSNTNSSF) has biased composition (low complexity). The stretch at 838 to 866 (VTSQDAVERAQQMKKELLDKLEKLAEDLP) forms a coiled coil.

This sequence belongs to the SBNO family.

The protein resides in the nucleus. In terms of biological role, plays a crucial role in the regulation of neural stem cells (NSCs) proliferation. Enhances the phosphorylation of GSK3B through the PI3K-Akt signaling pathway, thereby upregulating the Wnt/beta-catenin signaling pathway and promoting the proliferation of NSCs. This Gallus gallus (Chicken) protein is Protein strawberry notch homolog 1 (SBNO1).